Consider the following 466-residue polypeptide: Cysteine--tRNA ligase (466 aa).

Cys-29 is a binding site for Zn(2+). The 'HIGH' region signature appears at 31–41 (PTVYNYIHIGN). Cys-209, His-234, and Glu-238 together coordinate Zn(2+). The short motif at 266–270 (KMSKS) is the 'KMSKS' region element. Residue Lys-269 coordinates ATP.

Belongs to the class-I aminoacyl-tRNA synthetase family. In terms of assembly, monomer. The cofactor is Zn(2+).

It is found in the cytoplasm. The catalysed reaction is tRNA(Cys) + L-cysteine + ATP = L-cysteinyl-tRNA(Cys) + AMP + diphosphate. The protein is Cysteine--tRNA ligase of Lysinibacillus sphaericus (strain C3-41).